The following is a 187-amino-acid chain: MQTGLSLVCLVLLCSALGEAALRKTKKQAVVTDTGNSAKSDPEPVPIKTKGLKTLDRGWGEEIEWVQTYEEGLAKARENNKPLMVIHHLEDCPYSIALKKAFVADRLAQKLAREDFIMLNLVHPVADENQAPDGHYVPRVIFVDPSLTVRSDLKGRYGNKMYAYDADDIPELVTNMKKAKSYLKTEL.

The N-terminal stretch at M1–A20 is a signal peptide.

It belongs to the AGR family.

Its subcellular location is the secreted. In terms of biological role, probably involved in cement gland formation. This is Anterior gradient protein 1 (ag1) from Xenopus tropicalis (Western clawed frog).